The sequence spans 637 residues: 3D-(3,5/4)-trihydroxycyclohexane-1,2-dione hydrolase (637 aa).

E65 contributes to the thiamine diphosphate binding site. Residues 441–521 (SLPGDLQRLW…INVLLFDNSG (81 aa)) form a thiamine pyrophosphate binding region. Residues D492 and N519 each coordinate Mg(2+).

The protein belongs to the TPP enzyme family. The cofactor is Mg(2+). Requires thiamine diphosphate as cofactor.

It catalyses the reaction 3D-3,5/4-trihydroxycyclohexane-1,2-dione + H2O = 5-deoxy-D-glucuronate + H(+). The protein operates within polyol metabolism; myo-inositol degradation into acetyl-CoA; acetyl-CoA from myo-inositol: step 3/7. Involved in the cleavage of the C1-C2 bond of 3D-(3,5/4)-trihydroxycyclohexane-1,2-dione (THcHDO) to yield 5-deoxy-glucuronate (5DG). The polypeptide is 3D-(3,5/4)-trihydroxycyclohexane-1,2-dione hydrolase (Halalkalibacterium halodurans (strain ATCC BAA-125 / DSM 18197 / FERM 7344 / JCM 9153 / C-125) (Bacillus halodurans)).